Reading from the N-terminus, the 1843-residue chain is Proteasome activator complex subunit 4 (1843 aa).

The span at 1–11 (MEPAERAGVGE) shows a compositional bias: low complexity. The segment at 1–25 (MEPAERAGVGEPPEPGGRPEPGPRG) is disordered. The span at 12–22 (PPEPGGRPEPG) shows a compositional bias: pro residues. 2 HEAT repeats span residues 475-519 (PEGP…LVDC) and 998-1037 (NFCCRDIIPLVLEFLRPDRQGVTQQQFKGALYCLLGNHSG). The residue at position 1121 (S1121) is a Phosphoserine. 2 HEAT repeats span residues 1179–1217 (RVLPLRAIRFFVENLNHDAIVVRKMAISAVAGILKQLKR) and 1354–1392 (DAFLPVLKPHLEHLVADSHESTQRCVAEIIAGLIRGSKH). Residue S1614 is modified to Phosphoserine. 2 HEAT repeats span residues 1636–1674 (PHQVPLVLQVLKQTARSSSWHARYTVLTYLQTMVFYNLF) and 1680–1718 (EDAVKDIRWLVISLLEDEQLEVREMAATTLSGLLQCNFL). Positions 1650 to 1738 (ARSSSWHARY…EQLCKTKLPK (89 aa)) are bromodomain-like (BRDL). At S1746 the chain carries Phosphoserine.

This sequence belongs to the BLM10 family. As to quaternary structure, homodimer. Interacts with the 20S and 26S proteasomes. Component of the spermatoproteasome, a form of the proteasome specifically found in testis.

The protein resides in the cytoplasm. The protein localises to the cytosol. Its subcellular location is the nucleus. It is found in the nucleus speckle. Functionally, associated component of the proteasome that specifically recognizes acetylated histones and promotes ATP- and ubiquitin-independent degradation of core histones during spermatogenesis and DNA damage response. Recognizes and binds acetylated histones via its bromodomain-like (BRDL) region and activates the proteasome by opening the gated channel for substrate entry. Binds to the core proteasome via its C-terminus, which occupies the same binding sites as the proteasomal ATPases, opening the closed structure of the proteasome via an active gating mechanism. Component of the spermatoproteasome, a form of the proteasome specifically found in testis: binds to acetylated histones and promotes degradation of histones, thereby participating actively to the exchange of histones during spermatogenesis. Also involved in DNA damage response in somatic cells, by promoting degradation of histones following DNA double-strand breaks. This Homo sapiens (Human) protein is Proteasome activator complex subunit 4.